Here is a 239-residue protein sequence, read N- to C-terminus: 7-cyano-7-deazaguanine synthase (239 aa).

7 to 17 (LSGGIDSSTLL) is a binding site for ATP. The Zn(2+) site is built by Cys-184, Cys-192, Cys-195, and Cys-198.

It belongs to the QueC family. It depends on Zn(2+) as a cofactor.

It catalyses the reaction 7-carboxy-7-deazaguanine + NH4(+) + ATP = 7-cyano-7-deazaguanine + ADP + phosphate + H2O + H(+). Its pathway is purine metabolism; 7-cyano-7-deazaguanine biosynthesis. Its function is as follows. Catalyzes the ATP-dependent conversion of 7-carboxy-7-deazaguanine (CDG) to 7-cyano-7-deazaguanine (preQ(0)). This Archaeoglobus fulgidus (strain ATCC 49558 / DSM 4304 / JCM 9628 / NBRC 100126 / VC-16) protein is 7-cyano-7-deazaguanine synthase.